The chain runs to 208 residues: MPVHMMMSGIIIAGGRSRRFGTDKRRLRLWGEQGPCLLERAVALLQPLCSEVLVVLNDAHAWPDLPARLVADEQPGSGALGGVISGLQAMQTPTALVIAADMPVIVPALLAALAQWPFVGDALIPSSYPHPGQLQPLLAVYRHSALAPLRRVFAAGERRLQVAVTALHWVDPGPELWQMYDPTARSLLNLNTPDDLKLVQAYLGTTNI.

GTP is bound by residues 12 to 14 (IAG), Lys24, Asp72, and Asp101. Asp101 lines the Mg(2+) pocket.

The protein belongs to the MobA family. It depends on Mg(2+) as a cofactor.

Its subcellular location is the cytoplasm. The enzyme catalyses Mo-molybdopterin + GTP + H(+) = Mo-molybdopterin guanine dinucleotide + diphosphate. Its function is as follows. Transfers a GMP moiety from GTP to Mo-molybdopterin (Mo-MPT) cofactor (Moco or molybdenum cofactor) to form Mo-molybdopterin guanine dinucleotide (Mo-MGD) cofactor. This is Probable molybdenum cofactor guanylyltransferase from Chloroflexus aggregans (strain MD-66 / DSM 9485).